Consider the following 468-residue polypeptide: Glutamate--tRNA ligase 2 (468 aa).

Residues 9–19 (PSPTGFLHIGG) carry the 'HIGH' region motif. The 'KMSKS' region motif lies at 238–242 (KLSKR). Residue Lys-241 participates in ATP binding.

This sequence belongs to the class-I aminoacyl-tRNA synthetase family. Glutamate--tRNA ligase type 1 subfamily. Monomer.

The protein localises to the cytoplasm. The catalysed reaction is tRNA(Glu) + L-glutamate + ATP = L-glutamyl-tRNA(Glu) + AMP + diphosphate. Its function is as follows. Catalyzes the attachment of glutamate to tRNA(Glu) in a two-step reaction: glutamate is first activated by ATP to form Glu-AMP and then transferred to the acceptor end of tRNA(Glu). The protein is Glutamate--tRNA ligase 2 of Rhodospirillum centenum (strain ATCC 51521 / SW).